We begin with the raw amino-acid sequence, 338 residues long: O-methyltransferase 4 (338 aa).

G184, D207, N230, F231, K244, and R245 together coordinate S-adenosyl-L-methionine. The Proton acceptor role is filled by H248.

Belongs to the class I-like SAM-binding methyltransferase superfamily. Cation-independent O-methyltransferase family. COMT subfamily.

The enzyme catalyses (3,5-dichloro-2,4,6-trihydroxyphenyl)hexan-1-one + S-adenosyl-L-methionine = 1-(3,5-dichloro-2,6-dihydroxy-4-methoxyphenyl)hexan-1-one + S-adenosyl-L-homocysteine + H(+). This is O-methyltransferase 4 (omt4) from Dictyostelium discoideum (Social amoeba).